We begin with the raw amino-acid sequence, 445 residues long: Scarecrow-like protein 18 (445 aa).

Residues 1–21 show a composition bias toward low complexity; that stretch reads MLTSFKSSSSSSEDATATTTE. The interval 1 to 26 is disordered; it reads MLTSFKSSSSSSEDATATTTENPPPL. A GRAS domain is found at 32–445; that stretch reads SAATSASHHL…RPLFSVSSWK (414 aa). The leucine repeat I (LRI) stretch occupies residues 39-127; the sequence is HHLRRLLFTA…STVFTSSVCK (89 aa). The interval 146–217 is VHIID; sequence YLWLNQLTPF…SPPPSLRITG (72 aa). The VHIID motif lies at 179-183; it reads LHILD. The interval 227 to 259 is leucine repeat II (LRII); it reads RTGDRLTRFADSLGLQFQFHTLVIVEEDLAGLL. The interval 275-366 is PFYRE; sequence IAVNCVHFLH…QRWFGKEILD (92 aa). The segment at 369-445 is SAW; that stretch reads AAEETERKQR…RPLFSVSSWK (77 aa).

It belongs to the GRAS family. In terms of tissue distribution, expressed in roots and flowers.

The protein localises to the nucleus. Probable transcription factor required for axillary (lateral) shoot meristem formation during vegetative development. Seems to act upstream of REVOLUTA. This is Scarecrow-like protein 18 (SCL18) from Arabidopsis thaliana (Mouse-ear cress).